Reading from the N-terminus, the 390-residue chain is Chorismate synthase (390 aa).

2 residues coordinate NADP(+): Arg40 and Arg46. Residues 129–131 (RAS), 249–250 (QA), Gly294, 309–313 (KPIPT), and Arg335 contribute to the FMN site.

This sequence belongs to the chorismate synthase family. As to quaternary structure, homotetramer. FMNH2 is required as a cofactor.

It carries out the reaction 5-O-(1-carboxyvinyl)-3-phosphoshikimate = chorismate + phosphate. It participates in metabolic intermediate biosynthesis; chorismate biosynthesis; chorismate from D-erythrose 4-phosphate and phosphoenolpyruvate: step 7/7. Functionally, catalyzes the anti-1,4-elimination of the C-3 phosphate and the C-6 proR hydrogen from 5-enolpyruvylshikimate-3-phosphate (EPSP) to yield chorismate, which is the branch point compound that serves as the starting substrate for the three terminal pathways of aromatic amino acid biosynthesis. This reaction introduces a second double bond into the aromatic ring system. In Desulforudis audaxviator (strain MP104C), this protein is Chorismate synthase.